The following is a 213-amino-acid chain: Cytochrome c biogenesis ATP-binding export protein CcmA (213 aa).

Residues 8-213 (LQATALTCER…RDIDLGQWAA (206 aa)) enclose the ABC transporter domain. 40-47 (GPNGSGKT) provides a ligand contact to ATP.

It belongs to the ABC transporter superfamily. CcmA exporter (TC 3.A.1.107) family. As to quaternary structure, the complex is composed of two ATP-binding proteins (CcmA) and two transmembrane proteins (CcmB).

It localises to the cell inner membrane. The catalysed reaction is heme b(in) + ATP + H2O = heme b(out) + ADP + phosphate + H(+). Functionally, part of the ABC transporter complex CcmAB involved in the biogenesis of c-type cytochromes; once thought to export heme, this seems not to be the case, but its exact role is uncertain. Responsible for energy coupling to the transport system. This Pseudomonas savastanoi pv. phaseolicola (strain 1448A / Race 6) (Pseudomonas syringae pv. phaseolicola (strain 1448A / Race 6)) protein is Cytochrome c biogenesis ATP-binding export protein CcmA.